The following is a 376-amino-acid chain: Uroporphyrinogen decarboxylase (376 aa).

Residues 29–33, Asp-79, Tyr-155, Ser-210, and His-342 each bind substrate; that span reads RQAGR.

It belongs to the uroporphyrinogen decarboxylase family. As to quaternary structure, homodimer.

Its subcellular location is the cytoplasm. The catalysed reaction is uroporphyrinogen III + 4 H(+) = coproporphyrinogen III + 4 CO2. Its pathway is porphyrin-containing compound metabolism; protoporphyrin-IX biosynthesis; coproporphyrinogen-III from 5-aminolevulinate: step 4/4. Catalyzes the decarboxylation of four acetate groups of uroporphyrinogen-III to yield coproporphyrinogen-III. The sequence is that of Uroporphyrinogen decarboxylase from Paracidovorax citrulli (strain AAC00-1) (Acidovorax citrulli).